A 415-amino-acid chain; its full sequence is Gamma-glutamyl phosphate reductase (415 aa).

Belongs to the gamma-glutamyl phosphate reductase family.

It localises to the cytoplasm. It carries out the reaction L-glutamate 5-semialdehyde + phosphate + NADP(+) = L-glutamyl 5-phosphate + NADPH + H(+). It functions in the pathway amino-acid biosynthesis; L-proline biosynthesis; L-glutamate 5-semialdehyde from L-glutamate: step 2/2. In terms of biological role, catalyzes the NADPH-dependent reduction of L-glutamate 5-phosphate into L-glutamate 5-semialdehyde and phosphate. The product spontaneously undergoes cyclization to form 1-pyrroline-5-carboxylate. The sequence is that of Gamma-glutamyl phosphate reductase from Bacillus cereus (strain 03BB102).